The following is a 208-amino-acid chain: Ciliary-associated calcium-binding coiled-coil protein 1 (208 aa).

Testis-specific. Expressed in spermatocytes and round spermatids (at protein level).

Its subcellular location is the cytoplasm. The protein localises to the cytoskeleton. It localises to the microtubule organizing center. The protein resides in the centrosome. It is found in the cell projection. Its subcellular location is the cilium. The protein localises to the flagellum. Calcium-binding protein. May be involved in the control of sperm flagellar movement. The polypeptide is Ciliary-associated calcium-binding coiled-coil protein 1 (Mus musculus (Mouse)).